The sequence spans 438 residues: Transposon Ty2-LR1 Gag polyprotein (438 aa).

3 stretches are compositionally biased toward polar residues: residues 1-11 (MESQQLHQNPH), 19-39 (ASVT…SASN), and 49-60 (KVNSQQETTPGT). 3 disordered regions span residues 1–86 (MESQ…GQYQ), 364–397 (KNVS…AKAH), and 419–438 (SSQY…TERI). Positions 295-397 (ENNINVSDRL…SSKPRAAKAH (103 aa)) are RNA-binding. A compositionally biased stretch (low complexity) spans 369–381 (TSPNTTNTKVTTR).

In terms of assembly, homotrimer.

Its subcellular location is the cytoplasm. Its function is as follows. Capsid protein (CA) is the structural component of the virus-like particle (VLP), forming the shell that encapsulates the retrotransposons dimeric RNA genome. The particles are assembled from trimer-clustered units and there are holes in the capsid shells that allow for the diffusion of macromolecules. CA also has nucleocapsid-like chaperone activity, promoting primer tRNA(i)-Met annealing to the multipartite primer-binding site (PBS), dimerization of Ty2 RNA and initiation of reverse transcription. This chain is Transposon Ty2-LR1 Gag polyprotein (TY2A-LR1), found in Saccharomyces cerevisiae (strain ATCC 204508 / S288c) (Baker's yeast).